The sequence spans 106 residues: Cell division protein FtsB (106 aa).

The Cytoplasmic segment spans residues 1-3; sequence MGK. The helical transmembrane segment at 4 to 21 threads the bilayer; the sequence is LTLLLLALLGWLQYSLWL. Topologically, residues 22-106 are periplasmic; it reads GKNGVHDYVR…ASSSQNNLQK (85 aa). Positions 40–62 form a coiled coil; that stretch reads QGSNAKLKARNDQLFAEIDDLNG.

This sequence belongs to the FtsB family. In terms of assembly, part of a complex composed of FtsB, FtsL and FtsQ.

It is found in the cell inner membrane. Its function is as follows. Essential cell division protein. May link together the upstream cell division proteins, which are predominantly cytoplasmic, with the downstream cell division proteins, which are predominantly periplasmic. This Serratia proteamaculans (strain 568) protein is Cell division protein FtsB.